Reading from the N-terminus, the 234-residue chain is MSKVSKRISEVRNKIENKPYKAIEALNLLKDTATAKFVESAEAHIALKLDTKYADQQLRTTLVLPKGTGKKIRIAVIAEGEKATEAINAGADLAGSTDLVQDIMKGMLDFDRLIATPDMMPLIAKLGKVLGPRGLMPSPKSGTVTSDVKSAIEEFKKGKLEYRADKSGIVHISFGKTNFSVNDLLLNLEAVQESIDKNRPAGVKGKYWKSFYICSTMGPSIQLDISEFRDKNFQ.

The protein belongs to the universal ribosomal protein uL1 family. In terms of assembly, part of the 50S ribosomal subunit.

It localises to the plastid. The protein localises to the chloroplast. In terms of biological role, binds directly to 23S rRNA. Might be involved in E site tRNA release (Potential). The protein is Large ribosomal subunit protein uL1c (rpl1) of Guillardia theta (Cryptophyte).